The following is a 268-amino-acid chain: Glutamate racemase (268 aa).

Residues 13–14 (DS) and 45–46 (YG) contribute to the substrate site. The active-site Proton donor/acceptor is the Cys77. Position 78 to 79 (78 to 79 (NT)) interacts with substrate. Cys185 serves as the catalytic Proton donor/acceptor. 186–187 (TH) provides a ligand contact to substrate.

This sequence belongs to the aspartate/glutamate racemases family.

The catalysed reaction is L-glutamate = D-glutamate. Its pathway is cell wall biogenesis; peptidoglycan biosynthesis. In terms of biological role, provides the (R)-glutamate required for cell wall biosynthesis. This chain is Glutamate racemase, found in Vibrio campbellii (strain ATCC BAA-1116).